The primary structure comprises 883 residues: Probable ribonuclease ZC3H12C (883 aa).

Disordered regions lie at residues 53–109 (QLSP…ISVE) and 139–158 (DFKPEESQTTSKEAKKPPDV). Residue S230 is modified to Phosphoserine. The RNase NYN domain maps to 245–400 (LRPIVIDGSN…LGRHGPSLDN (156 aa)). The segment at 410 to 435 (EHKKQPCPYGKKCTYGHKCKYYHPER) adopts a C3H1-type zinc-finger fold. 3 disordered regions span residues 456 to 551 (AKTA…FPPQ), 680 to 738 (FHDP…KAPH), and 754 to 775 (SRLYDSSPSRQRKPYSRQEGLG). Positions 466-477 (KSNSVPCSTKAD) are enriched in polar residues. Basic and acidic residues predominate over residues 503 to 515 (LEEKLPTKNKLET). Polar residues predominate over residues 517–542 (SVPSLVSIPATSTAKPQSTTSLSNGL). Residues 705–714 (HLALHLPHSA) are compositionally biased toward low complexity.

This sequence belongs to the ZC3H12 family. It depends on Mg(2+) as a cofactor.

Its function is as follows. May function as RNase and regulate the levels of target RNA species. The polypeptide is Probable ribonuclease ZC3H12C (ZC3H12C) (Homo sapiens (Human)).